Reading from the N-terminus, the 347-residue chain is Ribosomal RNA large subunit methyltransferase M (347 aa).

Residues Ser184, 217–220 (APGG), Asp236, Asp256, and Asp272 contribute to the S-adenosyl-L-methionine site. The Proton acceptor role is filled by Lys301.

Belongs to the class I-like SAM-binding methyltransferase superfamily. RNA methyltransferase RlmE family. RlmM subfamily. Monomer.

It is found in the cytoplasm. The enzyme catalyses cytidine(2498) in 23S rRNA + S-adenosyl-L-methionine = 2'-O-methylcytidine(2498) in 23S rRNA + S-adenosyl-L-homocysteine + H(+). Functionally, catalyzes the 2'-O-methylation at nucleotide C2498 in 23S rRNA. This is Ribosomal RNA large subunit methyltransferase M from Xanthomonas oryzae pv. oryzae (strain PXO99A).